A 914-amino-acid polypeptide reads, in one-letter code: Alanine--tRNA ligase (914 aa).

Positions 613, 617, 717, and 721 each coordinate Zn(2+).

Belongs to the class-II aminoacyl-tRNA synthetase family. Requires Zn(2+) as cofactor.

It localises to the cytoplasm. It carries out the reaction tRNA(Ala) + L-alanine + ATP = L-alanyl-tRNA(Ala) + AMP + diphosphate. Catalyzes the attachment of alanine to tRNA(Ala) in a two-step reaction: alanine is first activated by ATP to form Ala-AMP and then transferred to the acceptor end of tRNA(Ala). Also edits incorrectly charged Ser-tRNA(Ala) and Gly-tRNA(Ala) via its editing domain. This chain is Alanine--tRNA ligase, found in Pyrococcus abyssi (strain GE5 / Orsay).